Here is a 534-residue protein sequence, read N- to C-terminus: Pentatricopeptide repeat-containing protein At2g20540 (534 aa).

PPR repeat units lie at residues 41-71, 72-106, 108-142, 143-173, 174-208, 209-239, 240-274, 275-305, 306-340, 341-371, and 377-407; these read SSFMVTKMVDFCDKIEDMDYATRLFNQVSNP, NVFLYNSIIRAYTHNSLYCDVIRIYKQLLRKSFEL, DRFTFPFMFKSCASLGSCYLGKQVHGHLCKFGPRF, HVVTENALIDMYMKFDDLVDAHKVFDEMYER, DVISWNSLLSGYARLGQMKKAKGLFHLMLDKTIVS, WTAMISGYTGIGCYVEAMDFFREMQLAGIEP, DEISLISVLPSCAQLGSLELGKWIHLYAERRGFLK, QTGVCNALIEMYSKCGVISQAIQLFGQMEGK, DVISWSTMISGYAYHGNAHGAIETFNEMQRAKVKP, NGITFLGLLSACSHVGMWQEGLRYFDMMRQD, and KIEHYGCLIDVLARAGKLERAVEITKTMPMK. Positions 412–487 are type E motif; sequence IWGSLLSSCR…TPGGSLIEVN (76 aa). A type E(+) motif region spans residues 488–518; the sequence is NIVQEFVSGDNSKPFWTEISIVLQLFTSHQD.

The protein belongs to the PPR family. PCMP-E subfamily.

The chain is Pentatricopeptide repeat-containing protein At2g20540 (PCMP-E78) from Arabidopsis thaliana (Mouse-ear cress).